A 914-amino-acid polypeptide reads, in one-letter code: DNA mismatch repair protein MutS (914 aa).

The disordered stretch occupies residues 1-24 (MDNKTDNKNNLTPQSAPSSAPHKE). Residues 8 to 18 (KNNLTPQSAPS) show a composition bias toward polar residues. An ATP-binding site is contributed by 662–669 (GPNMGGKS).

Belongs to the DNA mismatch repair MutS family.

Its function is as follows. This protein is involved in the repair of mismatches in DNA. It is possible that it carries out the mismatch recognition step. This protein has a weak ATPase activity. The polypeptide is DNA mismatch repair protein MutS (Bartonella henselae (strain ATCC 49882 / DSM 28221 / CCUG 30454 / Houston 1) (Rochalimaea henselae)).